A 1086-amino-acid chain; its full sequence is Lysine-specific demethylase 4B (1086 aa).

A JmjN domain is found at 15–57; sequence IMTFRPTMDEFRDFNRYVAYIESQGAHRAGLAKIIPPKEWKPR. 2-oxoglutarate is bound at residue Y133. A JmjC domain is found at 146 to 309; the sequence is VAQWNIGNLR…YGKVATQCTC (164 aa). Fe cation-binding residues include H189 and E191. Residues N199 and K207 each contribute to the 2-oxoglutarate site. Zn(2+)-binding residues include C235 and H241. K242 is a 2-oxoglutarate binding site. H277 serves as a coordination point for Fe cation. C307 and C309 together coordinate Zn(2+). A compositionally biased stretch (basic and acidic residues) spans 379-395; the sequence is SRPWRKAEEERRREPTR. Disordered regions lie at residues 379–536 and 575–624; these read SRPW…PPGA and PMEL…LSVV. A compositionally biased stretch (basic residues) spans 401–410; sequence SHRRRSQPKK. The segment covering 441 to 450 has biased composition (acidic residues); it reads MPEDEEEEEL. The segment covering 456–467 has biased composition (basic and acidic residues); that stretch reads HEAEGVEEDGRG. Residues 468–480 show a composition bias toward basic residues; that stretch reads KPRPTKARNKKKT. Residues 512–522 are compositionally biased toward low complexity; sequence GPAMGPMAAEG. The span at 585–597 shows a compositional bias: polar residues; the sequence is QAQAGDSQGTTPF. N6-acetyllysine is present on K599. The PHD-type 1 zinc-finger motif lies at 719–777; that stretch reads MCFTSSGENTEPLPANSYVGEDGTSPLISCAHCCLQVHASCYGVRPELAKEGWTCSRCA. The segment at 782 to 815 adopts a C2HC pre-PHD-type zinc-finger fold; the sequence is TAECCLCNLRGGALQRTTEHRWIHVICAIAVPEV. A PHD-type 2 zinc finger spans residues 838–895; the sequence is LKCIYCRKRMKRVSGACIQCSYEHCSTSFHVTCAHAAGVLMEPDDWPYVVSITCLKHR. Tudor domains lie at 905–962 and 963–1019; these read RTVS…CLRL and GPPP…EELP. The segment at 1024–1043 is disordered; it reads SRLSLSTGTPQEPSFSGDDV. Polar residues predominate over residues 1026 to 1037; it reads LSLSTGTPQEPS.

This sequence belongs to the JHDM3 histone demethylase family. Fe(2+) serves as cofactor.

Its subcellular location is the nucleus. The enzyme catalyses N(6),N(6),N(6)-trimethyl-L-lysyl(9)-[histone H3] + 2 2-oxoglutarate + 2 O2 = N(6)-methyl-L-lysyl(9)-[histone H3] + 2 formaldehyde + 2 succinate + 2 CO2. Histone demethylase that specifically demethylates 'Lys-9' of histone H3, thereby playing a role in histone code. Does not demethylate histone H3 'Lys-4', H3 'Lys-27', H3 'Lys-36' nor H4 'Lys-20'. Only able to demethylate trimethylated H3 'Lys-9', with a weaker activity than KDM4A, KDM4C and KDM4D. Demethylation of Lys residue generates formaldehyde and succinate. Plays a critical role in the development of the central nervous system (CNS). In Mus musculus (Mouse), this protein is Lysine-specific demethylase 4B (Kdm4b).